The primary structure comprises 308 residues: Taste receptor type 2 member 107 (308 aa).

Over 1 to 7 the chain is Extracellular; the sequence is MLSAAEG. Residues 8 to 28 traverse the membrane as a helical segment; it reads ILLCVVTSEAVLGVLGDTFIA. Residues 29–43 lie on the Cytoplasmic side of the membrane; it reads LANCMEYAKNKKLSK. Residues 44–64 form a helical membrane-spanning segment; it reads IGFILIGLAISRIGVVWIIIL. Topologically, residues 65–94 are extracellular; it reads QGYMQVFFPHILTFGNITEYITYIWVFLNH. A glycan (N-linked (GlcNAc...) asparagine) is linked at Asn-80. Residues 95-115 form a helical membrane-spanning segment; it reads LSVWFATNLNILYFLKIANFS. Topologically, residues 116-127 are cytoplasmic; that stretch reads NSVFLWLKSRVR. Residues 128–148 form a helical membrane-spanning segment; that stretch reads VVFIFLSGCLLTSWLLCFPQF. Over 149-180 the chain is Extracellular; sequence SKMLNNSKMYWGNTSWLQQQKNVFLINQSLTN. Residues Asn-153, Asn-161, and Asn-175 are each glycosylated (N-linked (GlcNAc...) asparagine). The helical transmembrane segment at 181–201 threads the bilayer; that stretch reads LGIFFFIIVSLITCFLLIVFL. The Cytoplasmic portion of the chain corresponds to 202–232; sequence WRHIRQMHSDGSGLRDLNTEAHVKAMRVLIS. A helical membrane pass occupies residues 233–253; it reads FAVLFILHFVGLSIQVLCFFL. Over 254 to 258 the chain is Extracellular; the sequence is PQNNL. Residues 259-279 traverse the membrane as a helical segment; it reads LFITGLIATCLYPCGHSIILI. The Cytoplasmic portion of the chain corresponds to 280 to 308; that stretch reads LGNKQLKQASLKALQHLTCCETKRNLSVT.

This sequence belongs to the G-protein coupled receptor T2R family.

It localises to the membrane. Its function is as follows. Putative taste receptor which may play a role in the perception of bitterness. This Rattus norvegicus (Rat) protein is Taste receptor type 2 member 107.